A 202-amino-acid polypeptide reads, in one-letter code: Tumor necrosis factor alpha-induced protein 8-like protein 3 (202 aa).

Positions Met-1–Glu-10 are enriched in acidic residues. The tract at residues Met-1–Ser-24 is disordered.

It belongs to the TNFAIP8 family.

The protein resides in the cytoplasm. The protein localises to the cell membrane. May act as a lipid transfer protein. This is Tumor necrosis factor alpha-induced protein 8-like protein 3 (tnfaip8l3) from Xenopus laevis (African clawed frog).